Here is a 271-residue protein sequence, read N- to C-terminus: Phosphate import ATP-binding protein PstB 3 (271 aa).

One can recognise an ABC transporter domain in the interval 20–266 (LRVEGLGFYY…PQETQTRDYV (247 aa)). 52 to 59 (GPSGCGKS) contacts ATP.

This sequence belongs to the ABC transporter superfamily. Phosphate importer (TC 3.A.1.7) family. As to quaternary structure, the complex is composed of two ATP-binding proteins (PstB), two transmembrane proteins (PstC and PstA) and a solute-binding protein (PstS).

The protein localises to the cell inner membrane. It carries out the reaction phosphate(out) + ATP + H2O = ADP + 2 phosphate(in) + H(+). Its function is as follows. Part of the ABC transporter complex PstSACB involved in phosphate import. Responsible for energy coupling to the transport system. This is Phosphate import ATP-binding protein PstB 3 from Synechocystis sp. (strain ATCC 27184 / PCC 6803 / Kazusa).